The sequence spans 910 residues: Ubiquitin carboxyl-terminal hydrolase 9 (910 aa).

Residues 19–134 form the DUSP domain; sequence TTPEEEKRIV…GGPPIERKLI (116 aa). Residues 68-89 are disordered; that stretch reads ISGESSEASRPGPIDNHDIIES. The USP domain maps to 303–894; it reads AGLSNLGNTC…AAYVLFYRRV (592 aa). C312 acts as the Nucleophile in catalysis. The Proton acceptor role is filled by H852.

The protein belongs to the peptidase C19 family.

It catalyses the reaction Thiol-dependent hydrolysis of ester, thioester, amide, peptide and isopeptide bonds formed by the C-terminal Gly of ubiquitin (a 76-residue protein attached to proteins as an intracellular targeting signal).. Functionally, recognizes and hydrolyzes the peptide bond at the C-terminal Gly of ubiquitin. Involved in the processing of poly-ubiquitin precursors as well as that of ubiquitinated proteins. The protein is Ubiquitin carboxyl-terminal hydrolase 9 (UBP9) of Arabidopsis thaliana (Mouse-ear cress).